The chain runs to 80 residues: Exodeoxyribonuclease 7 small subunit (80 aa).

Belongs to the XseB family. In terms of assembly, heterooligomer composed of large and small subunits.

The protein resides in the cytoplasm. It carries out the reaction Exonucleolytic cleavage in either 5'- to 3'- or 3'- to 5'-direction to yield nucleoside 5'-phosphates.. Functionally, bidirectionally degrades single-stranded DNA into large acid-insoluble oligonucleotides, which are then degraded further into small acid-soluble oligonucleotides. The protein is Exodeoxyribonuclease 7 small subunit of Vibrio parahaemolyticus serotype O3:K6 (strain RIMD 2210633).